A 249-amino-acid polypeptide reads, in one-letter code: Coproheme decarboxylase (249 aa).

Residues Arg131, 145–149 (YPMDK), His172, and Gln185 contribute to the Fe-coproporphyrin III site. Tyr145 is an active-site residue.

This sequence belongs to the ChdC family. Type 1 subfamily. Fe-coproporphyrin III serves as cofactor.

The catalysed reaction is Fe-coproporphyrin III + 2 H2O2 + 2 H(+) = heme b + 2 CO2 + 4 H2O. It catalyses the reaction Fe-coproporphyrin III + H2O2 + H(+) = harderoheme III + CO2 + 2 H2O. It carries out the reaction harderoheme III + H2O2 + H(+) = heme b + CO2 + 2 H2O. The protein operates within porphyrin-containing compound metabolism; protoheme biosynthesis. Involved in coproporphyrin-dependent heme b biosynthesis. Catalyzes the decarboxylation of Fe-coproporphyrin III (coproheme) to heme b (protoheme IX), the last step of the pathway. The reaction occurs in a stepwise manner with a three-propionate intermediate. The protein is Coproheme decarboxylase of Staphylococcus epidermidis (strain ATCC 35984 / DSM 28319 / BCRC 17069 / CCUG 31568 / BM 3577 / RP62A).